We begin with the raw amino-acid sequence, 352 residues long: Probable cytosolic iron-sulfur protein assembly protein CIAO1 homolog (352 aa).

7 WD repeats span residues 12-51 (ASNK…LWGS), 58-97 (AHKK…SAPE), 106-145 (GHTS…DVQC), 151-190 (PHSQ…WTVF), 195-234 (GHDS…GKSS), 245-284 (YHTR…LTHI), and 303-352 (AHSE…EYEL).

The protein belongs to the WD repeat CIA1 family.

Its function is as follows. Essential component of the cytosolic iron-sulfur (Fe/S) protein assembly machinery. Required for the maturation of extramitochondrial Fe/S proteins. In Schistosoma japonicum (Blood fluke), this protein is Probable cytosolic iron-sulfur protein assembly protein CIAO1 homolog.